The chain runs to 31 residues: Cyclotide psybry B (31 aa).

Positions 1–31 form a cross-link, cyclopeptide (Gly-Asn); it reads GFNPCGETCWNKPTCHAPGCTCSIANICVRN. 3 disulfides stabilise this stretch: Cys-5/Cys-20, Cys-9/Cys-22, and Cys-15/Cys-28.

In terms of processing, this is a cyclic peptide.

Its function is as follows. Probably participates in a plant defense mechanism. The polypeptide is Cyclotide psybry B (Psychotria brachyceras).